The primary structure comprises 98 residues: NADH-ubiquinone oxidoreductase chain 4L (98 aa).

The next 3 helical transmembrane spans lie at 1–21 (MSLVYMNIMTAFMVSLAGLLM), 29–49 (SLLCLEGMMLSLFVLATLTIL), and 61–81 (IILLVFAACEAALGLSLLVMV).

It belongs to the complex I subunit 4L family. Core subunit of respiratory chain NADH dehydrogenase (Complex I) which is composed of 45 different subunits.

It is found in the mitochondrion inner membrane. The enzyme catalyses a ubiquinone + NADH + 5 H(+)(in) = a ubiquinol + NAD(+) + 4 H(+)(out). Its function is as follows. Core subunit of the mitochondrial membrane respiratory chain NADH dehydrogenase (Complex I) which catalyzes electron transfer from NADH through the respiratory chain, using ubiquinone as an electron acceptor. Part of the enzyme membrane arm which is embedded in the lipid bilayer and involved in proton translocation. The sequence is that of NADH-ubiquinone oxidoreductase chain 4L (MT-ND4L) from Muntiacus feae (Fea's muntjac).